The sequence spans 211 residues: Adenylate kinase (211 aa).

ATP is bound at residue 10–15; sequence GSGKGT. The NMP stretch occupies residues 30–59; sequence STGDLFRENILNSTTLGKEIKKIVEKGELV. Residues T31, R36, 57–59, 85–88, and Q92 contribute to the AMP site; these read ELV and GFPR. Positions 121 to 158 are LID; the sequence is GRRICKSCNNIFNIYTLATKKNGICDVCKGDLYQREDD. An ATP-binding site is contributed by R122. C125 and C128 together coordinate Zn(2+). 131 to 132 contacts ATP; sequence IF. Residues C145 and C148 each coordinate Zn(2+). AMP contacts are provided by R155 and R166. An ATP-binding site is contributed by V194.

Belongs to the adenylate kinase family. In terms of assembly, monomer.

The protein resides in the cytoplasm. It catalyses the reaction AMP + ATP = 2 ADP. It functions in the pathway purine metabolism; AMP biosynthesis via salvage pathway; AMP from ADP: step 1/1. Functionally, catalyzes the reversible transfer of the terminal phosphate group between ATP and AMP. Plays an important role in cellular energy homeostasis and in adenine nucleotide metabolism. This chain is Adenylate kinase, found in Borrelia garinii subsp. bavariensis (strain ATCC BAA-2496 / DSM 23469 / PBi) (Borreliella bavariensis).